A 595-amino-acid polypeptide reads, in one-letter code: UvrABC system protein C (595 aa).

In terms of domain architecture, GIY-YIG spans 17-94; sequence IEPGCYLMKD…IKQYQPRYNI (78 aa). Residues 199–234 form the UVR domain; it reads KTILHNLEQKMQESSESLDFERAKEYRDLIQHIHNL.

Belongs to the UvrC family. As to quaternary structure, interacts with UvrB in an incision complex.

Its subcellular location is the cytoplasm. The UvrABC repair system catalyzes the recognition and processing of DNA lesions. UvrC both incises the 5' and 3' sides of the lesion. The N-terminal half is responsible for the 3' incision and the C-terminal half is responsible for the 5' incision. The protein is UvrABC system protein C of Staphylococcus saprophyticus subsp. saprophyticus (strain ATCC 15305 / DSM 20229 / NCIMB 8711 / NCTC 7292 / S-41).